The following is a 293-amino-acid chain: Ribosomal protein L11 methyltransferase (293 aa).

The S-adenosyl-L-methionine site is built by threonine 145, glycine 166, aspartate 188, and asparagine 230.

Belongs to the methyltransferase superfamily. PrmA family.

The protein localises to the cytoplasm. The enzyme catalyses L-lysyl-[protein] + 3 S-adenosyl-L-methionine = N(6),N(6),N(6)-trimethyl-L-lysyl-[protein] + 3 S-adenosyl-L-homocysteine + 3 H(+). Methylates ribosomal protein L11. In Shewanella baltica (strain OS155 / ATCC BAA-1091), this protein is Ribosomal protein L11 methyltransferase.